Here is a 493-residue protein sequence, read N- to C-terminus: Polyamine aminopropyltransferase 2 (493 aa).

Helical transmembrane passes span 9-29 (LCIF…ATLA), 32-52 (LLGN…LSMG), 68-88 (LAFV…VPIA), 101-121 (VIYG…PLAV), 137-157 (VLEK…YLFL), 161-181 (GLPL…FLLV), and 188-208 (KFLK…AVGH). The spermidine synthase stretch occupies residues 187–448 (KKFLKFLAIF…PLNFENFELK (262 aa)). In terms of domain architecture, PABS spans 202 to 437 (ATYAVGHKRI…GEWGMVIGSK (236 aa)). Position 233 (Q233) interacts with S-methyl-5'-thioadenosine. Spermidine contacts are provided by H263 and D287. Residues D306 and 340–341 (DA) each bind S-methyl-5'-thioadenosine. D358 serves as the catalytic Proton acceptor.

The protein belongs to the spermidine/spermine synthase family. Homodimer or homotetramer.

The protein localises to the cell membrane. The enzyme catalyses S-adenosyl 3-(methylsulfanyl)propylamine + putrescine = S-methyl-5'-thioadenosine + spermidine + H(+). Its pathway is amine and polyamine biosynthesis; spermidine biosynthesis; spermidine from putrescine: step 1/1. Functionally, catalyzes the irreversible transfer of a propylamine group from the amino donor S-adenosylmethioninamine (decarboxy-AdoMet) to putrescine (1,4-diaminobutane) to yield spermidine. The protein is Polyamine aminopropyltransferase 2 of Aquifex aeolicus (strain VF5).